The primary structure comprises 158 residues: Large ribosomal subunit protein mL50 (158 aa).

This sequence belongs to the mitochondrion-specific ribosomal protein mL50 family. In terms of assembly, component of the mitochondrial ribosome large subunit (39S) which comprises a 16S rRNA and about 50 distinct proteins.

It is found in the mitochondrion. This is Large ribosomal subunit protein mL50 (MRPL50) from Pongo abelii (Sumatran orangutan).